We begin with the raw amino-acid sequence, 338 residues long: Ankyrin-repeat domain containing transcription coregulator asaA (338 aa).

Positions 1 to 10 (MGAPHEEIQA) are enriched in basic and acidic residues. Disordered stretches follow at residues 1-70 (MGAP…LRST) and 112-137 (ASSV…PFID). Over residues 11–33 (LKRRREQNRLAQRRRRDNVRRRL) the composition is skewed to basic residues. Over residues 42–70 (SPASASQTSLCSSTDSRVTLNPHQSLRST) the composition is skewed to polar residues. Positions 112–130 (ASSVSPSSSAGPLSSSPSP) are enriched in low complexity. ANK repeat units lie at residues 235–264 (RWTT…DPNA), 268–297 (EGAT…DPTL), and 301–330 (AGWL…PVDY).

It participates in secondary metabolite biosynthesis. Transcription coregulator involved in regulation of gene cluster that mediates the biosynthesis of aspergillic acid, a hydroxamic acid-containing pyrazinone with aliphatic side chains that originates from leucine (Leu) and isoleucine (Ile). Aspergillic acid has antibiotic properties and was shown to be lethal to mice. This is Ankyrin-repeat domain containing transcription coregulator asaA from Aspergillus flavus (strain ATCC 200026 / FGSC A1120 / IAM 13836 / NRRL 3357 / JCM 12722 / SRRC 167).